A 191-amino-acid chain; its full sequence is Protein adenylyltransferase NmFic (191 aa).

Residues 37 to 162 (GTTAGLQQIH…NDLELRFLLK (126 aa)) form the Fido domain. ATP is bound by residues Lys67, 104–107 (NIAH), 112–118 (GNGRSTR), and 140–143 (KTLY). An Inhibitory (S/T)XXXE(G/N) motif motif is present at residues 182–187 (SYYYEG). At Tyr183 the chain carries O-AMP-tyrosine; in vitro. Position 186 (Glu186) interacts with ATP.

As to quaternary structure, homodimer. Post-translationally, auto-AMPylation at Tyr-183 in vitro.

It carries out the reaction L-tyrosyl-[protein] + ATP = O-(5'-adenylyl)-L-tyrosyl-[protein] + diphosphate. It catalyses the reaction L-threonyl-[protein] + ATP = 3-O-(5'-adenylyl)-L-threonyl-[protein] + diphosphate. With respect to regulation, adenylyltransferase activity is inhibited by the inhibitory helix present at the C-terminus: Glu-186 binds ATP and competes with ATP-binding at Arg-118, thereby preventing adenylyltransferase activity. Activation dissociates ATP-binding from Glu-186, allowing ordered binding of the entire ATP moiety with the alpha-phosphate in an orientation that is productive for accepting an incoming target hydroxyl side chain. Adenylyltransferase that mediates the addition of adenosine 5'-monophosphate (AMP) to specific residues of target proteins. The chain is Protein adenylyltransferase NmFic from Neisseria meningitidis serogroup B (strain ATCC BAA-335 / MC58).